A 30-amino-acid chain; its full sequence is Cyclotide mden-E (30 aa).

The cyclopeptide (Gly-Asn) cross-link spans 1–30; that stretch reads GIPCGESCVYIPCITAAIGCSCKSKVCYRN. Cystine bridges form between C4-C20, C8-C22, and C13-C27.

The protein belongs to the cyclotide family. Bracelet subfamily. This is a cyclic peptide.

Functionally, probably participates in a plant defense mechanism. The sequence is that of Cyclotide mden-E from Melicytus dentatus (Tree violet).